Consider the following 91-residue polypeptide: M-myrmeciitoxin-Mb3a (91 aa).

The signal sequence occupies residues M1 to S21. Positions P22–A54 are excised as a propeptide.

As to quaternary structure, homodimer; disulfide-linked. In terms of tissue distribution, expressed by the venom gland and reservoir.

Its subcellular location is the secreted. In terms of biological role, causes a significant and dose-dependent histamine release, probably by influencing the signal transduction of mast cells through a non-IgE-mediated pathway. This peptide does not have cytotoxic activities. The sequence is that of M-myrmeciitoxin-Mb3a from Myrmecia banksi (Jack jumper ant).